Consider the following 85-residue polypeptide: MELKKSIGDYTETEFKKIIENIINCEGDEKKQDDNLEHFISVTEHPSGSDLIYYPEGNNDGSPEAVIKEIKEWRAANGKSGFKQG.

Belongs to the colicins ColE2/ColE8/ColE9 and pyocins S1/S2 family.

This chain is Colicin-E8 immunity protein in ColE6 (imm), found in Escherichia coli.